Reading from the N-terminus, the 365-residue chain is Chorismate synthase (365 aa).

NADP(+) contacts are provided by R48 and R54. Residues 125–127, 237–238, G277, 292–296, and R318 contribute to the FMN site; these read RSS, NA, and KPTSS.

This sequence belongs to the chorismate synthase family. As to quaternary structure, homotetramer. It depends on FMNH2 as a cofactor.

It carries out the reaction 5-O-(1-carboxyvinyl)-3-phosphoshikimate = chorismate + phosphate. Its pathway is metabolic intermediate biosynthesis; chorismate biosynthesis; chorismate from D-erythrose 4-phosphate and phosphoenolpyruvate: step 7/7. Catalyzes the anti-1,4-elimination of the C-3 phosphate and the C-6 proR hydrogen from 5-enolpyruvylshikimate-3-phosphate (EPSP) to yield chorismate, which is the branch point compound that serves as the starting substrate for the three terminal pathways of aromatic amino acid biosynthesis. This reaction introduces a second double bond into the aromatic ring system. This Polaromonas naphthalenivorans (strain CJ2) protein is Chorismate synthase.